Consider the following 475-residue polypeptide: Ankyrin repeat, SAM and basic leucine zipper domain-containing protein 1 (475 aa).

The interval 1-25 (MAAGALRGLPVAGGGESSESEDDGW) is disordered. 3 positions are modified to phosphoserine: S17, S18, and S20. ANK repeat units lie at residues 45–74 (EKKE…SVDS), 78–107 (YGWT…NASF), 110–144 (DKQS…DPNV), 148–177 (RLMT…EVNT), 181–210 (NGYT…NKML), and 214–243 (DGKM…PLEG). The 63-residue stretch at 272-334 (SYTAFGDLEV…KILAALKELQ (63 aa)) folds into the SAM domain.

In terms of assembly, interacts with DDX4, PIWIL1, RANBP9 and TDRD1.

Its subcellular location is the cytoplasm. Plays a central role during spermatogenesis by repressing transposable elements and preventing their mobilization, which is essential for the germline integrity. Acts via the piRNA metabolic process, which mediates the repression of transposable elements during meiosis by forming complexes composed of piRNAs and Piwi proteins and governs the methylation and subsequent repression of transposons. Its association with pi-bodies suggests a participation in the primary piRNAs metabolic process. Required prior to the pachytene stage to facilitate the production of multiple types of piRNAs, including those associated with repeats involved in the regulation of retrotransposons. May act by mediating protein-protein interactions during germ cell maturation. This chain is Ankyrin repeat, SAM and basic leucine zipper domain-containing protein 1 (ASZ1), found in Pongo abelii (Sumatran orangutan).